The sequence spans 415 residues: Histidine--tRNA ligase (415 aa).

Belongs to the class-II aminoacyl-tRNA synthetase family. As to quaternary structure, homodimer.

The protein resides in the cytoplasm. The catalysed reaction is tRNA(His) + L-histidine + ATP = L-histidyl-tRNA(His) + AMP + diphosphate + H(+). The protein is Histidine--tRNA ligase of Rhodospirillum rubrum (strain ATCC 11170 / ATH 1.1.1 / DSM 467 / LMG 4362 / NCIMB 8255 / S1).